Reading from the N-terminus, the 456-residue chain is Equilibrative nucleoside transporter 2 (456 aa).

Residues 13-33 (LVGISFFILGLGTLLPWNFFI) form a helical membrane-spanning segment. Asn-48 and Asn-57 each carry an N-linked (GlcNAc...) asparagine glycan. 5 helical membrane passes run 70-90 (WVTLLSQLPLLLFTLLNSFLY), 99-119 (ILGSLLAILLLFALTAALVKV), 124-144 (GPFFSITMASVCFINSFSAVL), 162-182 (LFLSGQGLAGIFAALAMLLSM), and 193-213 (LGYFITPCVGILMSIVCYLSL). N-linked (GlcNAc...) asparagine glycosylation occurs at Asn-225. Ser-252 bears the Phosphoserine mark. Transmembrane regions (helical) follow at residues 291–311 (WLTALCLVLVFTVTLSVFPAI), 324–344 (WSQFFNPICCFLLFNIMDWLG), 360–380 (LLPLLVCLRFLFVPLFMLCHV), 386–406 (LPILFPQDAYFITFMLLFAVS), and 432–452 (ALMTFFLALGLSCGASLSFLF).

This sequence belongs to the SLC29A/ENT transporter (TC 2.A.57) family. Glycosylated. Highly expressed in skeletal muscle. Expressed in liver, lung, placenta, brain, heart, kidney and ovarian tissues. Expressed in testis at the blood-brain-barrier.

It is found in the apical cell membrane. The protein resides in the basolateral cell membrane. The enzyme catalyses inosine(in) = inosine(out). It catalyses the reaction adenosine(in) = adenosine(out). It carries out the reaction uridine(out) = uridine(in). The catalysed reaction is thymidine(in) = thymidine(out). The enzyme catalyses hypoxanthine(out) = hypoxanthine(in). It catalyses the reaction adenine(out) = adenine(in). It carries out the reaction cytidine(in) = cytidine(out). The catalysed reaction is thymine(out) = thymine(in). The enzyme catalyses uracil(in) = uracil(out). It catalyses the reaction guanine(out) = guanine(in). It carries out the reaction guanosine(in) = guanosine(out). In terms of biological role, bidirectional uniporter involved in the facilitative transport of nucleosides and nucleobases, and contributes to maintaining their cellular homeostasis. Functions as a Na(+)-independent, passive transporter. Involved in the transport of nucleosides such as inosine, adenosine, uridine, thymidine, cytidine and guanosine. Also able to transport purine nucleobases (hypoxanthine, adenine, guanine) and pyrimidine nucleobases (thymine, uracil). Involved in nucleoside transport at basolateral membrane of kidney cells, allowing liver absorption of nucleoside metabolites. Mediates apical nucleoside uptake into Sertoli cells, thereby regulating the transport of nucleosides in testis across the blood-testis-barrier. Mediates both the influx and efflux of hypoxanthine in skeletal muscle microvascular endothelial cells to control the amount of intracellular hypoxanthine available for xanthine oxidase-mediated ROS production. Non functional nucleoside transporter protein for adenosine or thymidine transport. Does not express on cell membrane. This Homo sapiens (Human) protein is Equilibrative nucleoside transporter 2.